Reading from the N-terminus, the 105-residue chain is Fe-S protein maturation auxiliary factor PG_1777 (105 aa).

Belongs to the Fe-S cluster assembly domain superfamily. MIP18-like family. Putative homodimer; may be disulfide-linked.

Its function is as follows. Iron binding protein that protects DNA from Fenton chemistry-mediated damage caused by hydrogen peroxide induced oxidative stress. May be involved in iron-sulfur cluster assembly. The sequence is that of Fe-S protein maturation auxiliary factor PG_1777 from Porphyromonas gingivalis (strain ATCC BAA-308 / W83).